We begin with the raw amino-acid sequence, 331 residues long: Coiled-coil domain-containing protein 92 (331 aa).

2 coiled-coil regions span residues Met-18–Thr-44 and Asp-76–Ala-152. Positions Ser-171–Pro-184 are enriched in low complexity. Residues Ser-171–Ala-212 are disordered. Residues Pro-193–Arg-203 show a composition bias toward basic and acidic residues. Ser-209 is subject to Phosphoserine.

Interacts with CEP164. In terms of assembly, (Microbial infection) Interacts with ebolavirus protein NP; this interaction sequesters NP in the cytoplasm. Post-translationally, phosphorylated at Ser-209 by TTBK2.

The protein resides in the cytoplasm. It is found in the cytoskeleton. Its subcellular location is the microtubule organizing center. It localises to the centrosome. The protein localises to the centriole. Its function is as follows. Interferon-stimulated protein that plays a role in innate immunity. Strongly inhibits ebolavirus transcription and replication. Forms a complex with viral RNA-bound nucleocapsid NP and thereby prevents the transport of NP to the cell surface. The protein is Coiled-coil domain-containing protein 92 (CCDC92) of Homo sapiens (Human).